The sequence spans 224 residues: Deoxyribose-phosphate aldolase (224 aa).

Catalysis depends on aspartate 92, which acts as the Proton donor/acceptor. The Schiff-base intermediate with acetaldehyde role is filled by lysine 154. The active-site Proton donor/acceptor is lysine 183.

The protein belongs to the DeoC/FbaB aldolase family. DeoC type 1 subfamily.

The protein localises to the cytoplasm. It carries out the reaction 2-deoxy-D-ribose 5-phosphate = D-glyceraldehyde 3-phosphate + acetaldehyde. It functions in the pathway carbohydrate degradation; 2-deoxy-D-ribose 1-phosphate degradation; D-glyceraldehyde 3-phosphate and acetaldehyde from 2-deoxy-alpha-D-ribose 1-phosphate: step 2/2. Catalyzes a reversible aldol reaction between acetaldehyde and D-glyceraldehyde 3-phosphate to generate 2-deoxy-D-ribose 5-phosphate. This is Deoxyribose-phosphate aldolase from Histophilus somni (strain 129Pt) (Haemophilus somnus).